A 202-amino-acid polypeptide reads, in one-letter code: Peptidyl-tRNA hydrolase (202 aa).

Y14 is a tRNA binding site. Residue H19 is the Proton acceptor of the active site. Y64, N66, and N112 together coordinate tRNA.

This sequence belongs to the PTH family. In terms of assembly, monomer.

The protein resides in the cytoplasm. It carries out the reaction an N-acyl-L-alpha-aminoacyl-tRNA + H2O = an N-acyl-L-amino acid + a tRNA + H(+). Hydrolyzes ribosome-free peptidyl-tRNAs (with 1 or more amino acids incorporated), which drop off the ribosome during protein synthesis, or as a result of ribosome stalling. Its function is as follows. Catalyzes the release of premature peptidyl moieties from peptidyl-tRNA molecules trapped in stalled 50S ribosomal subunits, and thus maintains levels of free tRNAs and 50S ribosomes. The sequence is that of Peptidyl-tRNA hydrolase from Xanthobacter autotrophicus (strain ATCC BAA-1158 / Py2).